The primary structure comprises 388 residues: Paired box protein Pax-5 (388 aa).

Positions 15–141 (RHGGVNQLGG…SSINRIIRTK (127 aa)) form a DNA-binding region, paired. Residues 18 to 74 (GVNQLGGVFVNGRPLPDVVRQRIVELAHQGVRPCDISRQLRVSHGCVSKILGRYYET) are PAI subdomain. Residues 93-141 (KVVDKIADYKRQNPTMFAWEIRDRLLAERVCDNDTVPSVSSINRIIRTK) form an RED subdomain region. Positions 143–158 (QQPTNQQIPPSNHSIA) are enriched in polar residues. Disordered stretches follow at residues 143–162 (QQPTNQQIPPSNHSIASTGS) and 191–217 (AETNKRKRDEGIQESPIPNGHSLPGRD).

First detected in mid-neurula embryos in the folding neural tube. With the completion of neurulation, expression becomes localized to the midbrain/hindbrain boundary (MHB) till at least stage 40. Expression is absent from regions adjacent to the MHB. In tailbuds, weakly and transiently expressed in the developing otic vesicle from stage 21 to stage 27.

The protein resides in the nucleus. Probable transcription factor. This chain is Paired box protein Pax-5, found in Xenopus laevis (African clawed frog).